A 350-amino-acid polypeptide reads, in one-letter code: Carbamoyl dehydratase HypE (350 aa).

S-carbamoylcysteine is present on Cys-350. Cys-350 carries the post-translational modification S-cyanocysteine.

The protein belongs to the HypE family. Post-translationally, modified by HypF, which adds a carboxamido group to the thiolate of the C-terminal cysteine, yielding a protein-S-carboxamide. The carboxamido group is then dehydrated by HypE itself to yield a protein-thiocyanate.

The catalysed reaction is C-terminal S-carboxamide-L-cysteinyl-[HypE protein] + ATP = C-terminal S-cyanate-L-cysteinyl-[HypE protein] + ADP + phosphate + H(+). It functions in the pathway protein modification; [NiFe] hydrogenase maturation. Its function is as follows. Involved in the maturation of [NiFe] hydrogenases. Along with HypF, it catalyzes the synthesis of the CN ligands of the active site iron of [NiFe]-hydrogenases. HypE catalyzes the ATP-dependent dehydration of the carboxamido group attached to its C-terminal cysteine to a cyano group. The chain is Carbamoyl dehydratase HypE from Rhizobium leguminosarum bv. viciae.